Reading from the N-terminus, the 510-residue chain is Chromosomal replication initiator protein DnaA (510 aa).

Residues 1 to 107 form a domain I, interacts with DnaA modulators region; that stretch reads MTNDPGSGFA…VRIAPPPADD (107 aa). Residues 107 to 169 are domain II; that stretch reads DDDDSVAAAV…ADTSASAGGT (63 aa). The disordered stretch occupies residues 119–168; it reads PGLEASPETSQEVSDEIDDFGENAPNSRQSWPTHFKKRSTDADTSASAGG. Residues 170-386 form a domain III, AAA+ region region; that stretch reads SLNRRYTFDT…GALIRVTAFA (217 aa). Positions 214, 216, 217, and 218 each coordinate ATP. Residues 387–510 are domain IV, binds dsDNA; that stretch reads SLNKTPIDKA…TTRIRQRSKR (124 aa).

It belongs to the DnaA family. As to quaternary structure, oligomerizes as a right-handed, spiral filament on DNA at oriC.

The protein resides in the cytoplasm. Its function is as follows. Plays an essential role in the initiation and regulation of chromosomal replication. ATP-DnaA binds to the origin of replication (oriC) to initiate formation of the DNA replication initiation complex once per cell cycle. Binds the DnaA box (a 9 base pair repeat at the origin) and separates the double-stranded (ds)DNA. Forms a right-handed helical filament on oriC DNA; dsDNA binds to the exterior of the filament while single-stranded (ss)DNA is stabiized in the filament's interior. The ATP-DnaA-oriC complex binds and stabilizes one strand of the AT-rich DNA unwinding element (DUE), permitting loading of DNA polymerase. After initiation quickly degrades to an ADP-DnaA complex that is not apt for DNA replication. Binds acidic phospholipids. The chain is Chromosomal replication initiator protein DnaA from Mycobacterium marinum (strain ATCC BAA-535 / M).